Consider the following 203-residue polypeptide: LexA repressor (203 aa).

Residues 30–50 constitute a DNA-binding region (H-T-H motif); the sequence is VREICQAVSLKSTSTVHGHLK. Catalysis depends on for autocatalytic cleavage activity residues Ser127 and Lys164.

This sequence belongs to the peptidase S24 family. As to quaternary structure, homodimer.

The catalysed reaction is Hydrolysis of Ala-|-Gly bond in repressor LexA.. Its function is as follows. Represses a number of genes involved in the response to DNA damage (SOS response), including recA and lexA. In the presence of single-stranded DNA, RecA interacts with LexA causing an autocatalytic cleavage which disrupts the DNA-binding part of LexA, leading to derepression of the SOS regulon and eventually DNA repair. This chain is LexA repressor, found in Clostridium perfringens (strain SM101 / Type A).